The primary structure comprises 372 residues: Glutamate 5-kinase (372 aa).

Residue lysine 14 coordinates ATP. Residues serine 54, aspartate 141, and asparagine 153 each coordinate substrate. ATP-binding positions include threonine 173 to aspartate 174 and threonine 215 to lysine 221. A PUA domain is found at alanine 280–valine 358.

This sequence belongs to the glutamate 5-kinase family.

Its subcellular location is the cytoplasm. It catalyses the reaction L-glutamate + ATP = L-glutamyl 5-phosphate + ADP. It functions in the pathway amino-acid biosynthesis; L-proline biosynthesis; L-glutamate 5-semialdehyde from L-glutamate: step 1/2. Catalyzes the transfer of a phosphate group to glutamate to form L-glutamate 5-phosphate. The chain is Glutamate 5-kinase from Laribacter hongkongensis (strain HLHK9).